The sequence spans 205 residues: Glycerol-3-phosphate acyltransferase (205 aa).

The next 6 membrane-spanning stretches (helical) occupy residues 7–27 (MTALVLAGYLSGSLLGAVWVC), 54–74 (VVPAALTLGVDAAKAMPVLWV), 80–100 (LPIWAQGAVGLSVLVGHSYPL), 116–136 (VLLMIATPVAWVCALCWALLA), 141–161 (TAAVASLAAALLAPLASYWLA), and 163–183 (EATLVVSVFSALVLVRHAWNI).

It belongs to the PlsY family. In terms of assembly, probably interacts with PlsX.

The protein localises to the cell inner membrane. It carries out the reaction an acyl phosphate + sn-glycerol 3-phosphate = a 1-acyl-sn-glycero-3-phosphate + phosphate. The protein operates within lipid metabolism; phospholipid metabolism. In terms of biological role, catalyzes the transfer of an acyl group from acyl-phosphate (acyl-PO(4)) to glycerol-3-phosphate (G3P) to form lysophosphatidic acid (LPA). This enzyme utilizes acyl-phosphate as fatty acyl donor, but not acyl-CoA or acyl-ACP. The chain is Glycerol-3-phosphate acyltransferase from Chromohalobacter salexigens (strain ATCC BAA-138 / DSM 3043 / CIP 106854 / NCIMB 13768 / 1H11).